The sequence spans 61 residues: Small ribosomal subunit protein eS31 (61 aa).

4 residues coordinate Zn(2+): C22, C25, C38, and C41. The segment at 22-41 (CPRCGSFMAEHKDRYHCGKC) adopts a C4-type zinc-finger fold.

This sequence belongs to the eukaryotic ribosomal protein eS31 family. As to quaternary structure, part of the 30S ribosomal subunit. It depends on Zn(2+) as a cofactor.

This Nanoarchaeum equitans (strain Kin4-M) protein is Small ribosomal subunit protein eS31.